The sequence spans 290 residues: ATP synthase gamma chain (290 aa).

The protein belongs to the ATPase gamma chain family. F-type ATPases have 2 components, CF(1) - the catalytic core - and CF(0) - the membrane proton channel. CF(1) has five subunits: alpha(3), beta(3), gamma(1), delta(1), epsilon(1). CF(0) has three main subunits: a, b and c.

It localises to the cell inner membrane. Its function is as follows. Produces ATP from ADP in the presence of a proton gradient across the membrane. The gamma chain is believed to be important in regulating ATPase activity and the flow of protons through the CF(0) complex. The protein is ATP synthase gamma chain of Phenylobacterium zucineum (strain HLK1).